Consider the following 754-residue polypeptide: MEINPYLMFLNNDVTSLISTTYPYTGPPPMSHGSSTKYTLETIKRTYDYSRTSVEKTSKVFNIPRRKFCNCLEDKDDLVKPTGNVDISSLLGLAEMMEKRMGEGFFKHCVMEAETEILKMHFSRLTEGRQTYDWTSERNMPAATALQLTVDAIKETEGPFKGTTMLEYCNKMIEMLDWKEVKFRKVKTMVRREKDKRSGKEIKTKVPVMGIDSIKHDEFLIRALTINTMAKDGERGKLQRRAIATPGMIVRPFSKIVETVAQKICEKLKESGLPVGGNEKKAKLKTTVTSLNARMNSDQFAVNITGDNSKWNECQQPEAYLALLAYITKDSSDLMKDLCSVAPVLFCNKFVKLGQGIRLSNKRKTKEVIIKAEKMGKYKNLMREEYKNLFEPLEKYIQKDVCFLPGGMLMGMFNMLSTVLGVSTLCYMDEELKAKGCFWTGLQSSDDFVLFAVASNWSNIHWTIRRFNAVCKLIGINMSLEKSYGSLPELFEFTSMFFDGEFVSNLAMELPAFTTAGVNEGVDFTAAMSIIKTNMINNSLSPSTALMALRICLQEFRATYRVHPWDSKVKGGRMKIINEFIKTIESKDGLLIADGGKLMNNISTLHIPEEVLKFEKMDEQYRNRVFNPKNPFTNFDKTIDIFRAHGPIRVEENEAVVSTHSFRTRANRTLLNTDMRAMMAEEKRYQMVCDIFKSVFESADINPPIGAMSIGEAIEEKLLERAKMKRDIGAIEDSEYEEIKDIIRDAKKARIESR.

Short sequence motifs (nuclear localization signal) lie at residues 189–197 (MVRREKDKR) and 205–218 (KVPV…KHDE). Residues 251–258 (RPFSKIVE) are promoter-binding site. The RdRp catalytic domain occupies 288–484 (VTSLNARMNS…GINMSLEKSY (197 aa)).

The protein belongs to the influenza viruses polymerase PB1 family. Influenza RNA polymerase is composed of three subunits: PB1, PB2 and PA. Interacts (via N-terminus) with PA (via C-terminus). Interacts (via C-terminus) with PB2 (via N-terminus); this interaction is essential for transcription initiation. Phosphorylated by host PRKCA.

The protein localises to the host nucleus. The protein resides in the host cytoplasm. The enzyme catalyses RNA(n) + a ribonucleoside 5'-triphosphate = RNA(n+1) + diphosphate. Its function is as follows. RNA-dependent RNA polymerase which is responsible for replication and transcription of virus RNA segments. The transcription of viral mRNAs occurs by a unique mechanism called cap-snatching. 5' methylated caps of cellular mRNAs are cleaved after 10-13 nucleotides by PA. In turn, these short capped RNAs are used as primers by PB1 for transcription of viral mRNAs. During virus replication, PB1 initiates RNA synthesis and copy vRNA into complementary RNA (cRNA) which in turn serves as a template for the production of more vRNAs. The polypeptide is RNA-directed RNA polymerase catalytic subunit (Homo sapiens (Human)).